Here is a 331-residue protein sequence, read N- to C-terminus: Biotin synthase (331 aa).

Residues phenylalanine 52–arginine 281 enclose the Radical SAM core domain. 3 residues coordinate [4Fe-4S] cluster: cysteine 70, cysteine 74, and cysteine 77. The [2Fe-2S] cluster site is built by cysteine 114, cysteine 146, cysteine 206, and arginine 276.

It belongs to the radical SAM superfamily. Biotin synthase family. In terms of assembly, homodimer. It depends on [4Fe-4S] cluster as a cofactor. [2Fe-2S] cluster is required as a cofactor.

It carries out the reaction (4R,5S)-dethiobiotin + (sulfur carrier)-SH + 2 reduced [2Fe-2S]-[ferredoxin] + 2 S-adenosyl-L-methionine = (sulfur carrier)-H + biotin + 2 5'-deoxyadenosine + 2 L-methionine + 2 oxidized [2Fe-2S]-[ferredoxin]. It participates in cofactor biosynthesis; biotin biosynthesis; biotin from 7,8-diaminononanoate: step 2/2. Catalyzes the conversion of dethiobiotin (DTB) to biotin by the insertion of a sulfur atom into dethiobiotin via a radical-based mechanism. The protein is Biotin synthase of Bacillus pumilus (strain SAFR-032).